Reading from the N-terminus, the 401-residue chain is Homoserine O-acetyltransferase (401 aa).

In terms of domain architecture, AB hydrolase-1 spans 37–358 (NAVLVCHALT…HGHDAFLVEP (322 aa)). Serine 146 serves as the catalytic Nucleophile. Arginine 215 serves as a coordination point for substrate. Catalysis depends on residues aspartate 318 and histidine 351. Aspartate 352 lines the substrate pocket.

Belongs to the AB hydrolase superfamily. MetX family. Homodimer.

Its subcellular location is the cytoplasm. It catalyses the reaction L-homoserine + acetyl-CoA = O-acetyl-L-homoserine + CoA. Its pathway is amino-acid biosynthesis; L-methionine biosynthesis via de novo pathway; O-acetyl-L-homoserine from L-homoserine: step 1/1. Its function is as follows. Transfers an acetyl group from acetyl-CoA to L-homoserine, forming acetyl-L-homoserine. The sequence is that of Homoserine O-acetyltransferase from Natronomonas pharaonis (strain ATCC 35678 / DSM 2160 / CIP 103997 / JCM 8858 / NBRC 14720 / NCIMB 2260 / Gabara) (Halobacterium pharaonis).